The following is a 548-amino-acid chain: Glucose-6-phosphate isomerase (548 aa).

Glutamate 353 acts as the Proton donor in catalysis. Residues histidine 384 and lysine 512 contribute to the active site.

The protein belongs to the GPI family.

The protein localises to the cytoplasm. The catalysed reaction is alpha-D-glucose 6-phosphate = beta-D-fructose 6-phosphate. The protein operates within carbohydrate biosynthesis; gluconeogenesis. It participates in carbohydrate degradation; glycolysis; D-glyceraldehyde 3-phosphate and glycerone phosphate from D-glucose: step 2/4. In terms of biological role, catalyzes the reversible isomerization of glucose-6-phosphate to fructose-6-phosphate. The polypeptide is Glucose-6-phosphate isomerase (Pseudoalteromonas translucida (strain TAC 125)).